The sequence spans 560 residues: Dihydroxy-acid dehydratase (560 aa).

Position 80 (Asp-80) interacts with Mg(2+). Position 121 (Cys-121) interacts with [2Fe-2S] cluster. Residues Asp-122 and Lys-123 each coordinate Mg(2+). The residue at position 123 (Lys-123) is an N6-carboxylysine. Cys-194 is a [2Fe-2S] cluster binding site. Glu-447 lines the Mg(2+) pocket. Ser-473 acts as the Proton acceptor in catalysis.

This sequence belongs to the IlvD/Edd family. Homodimer. [2Fe-2S] cluster serves as cofactor. Requires Mg(2+) as cofactor.

It carries out the reaction (2R)-2,3-dihydroxy-3-methylbutanoate = 3-methyl-2-oxobutanoate + H2O. It catalyses the reaction (2R,3R)-2,3-dihydroxy-3-methylpentanoate = (S)-3-methyl-2-oxopentanoate + H2O. The protein operates within amino-acid biosynthesis; L-isoleucine biosynthesis; L-isoleucine from 2-oxobutanoate: step 3/4. It functions in the pathway amino-acid biosynthesis; L-valine biosynthesis; L-valine from pyruvate: step 3/4. Its function is as follows. Functions in the biosynthesis of branched-chain amino acids. Catalyzes the dehydration of (2R,3R)-2,3-dihydroxy-3-methylpentanoate (2,3-dihydroxy-3-methylvalerate) into 2-oxo-3-methylpentanoate (2-oxo-3-methylvalerate) and of (2R)-2,3-dihydroxy-3-methylbutanoate (2,3-dihydroxyisovalerate) into 2-oxo-3-methylbutanoate (2-oxoisovalerate), the penultimate precursor to L-isoleucine and L-valine, respectively. This is Dihydroxy-acid dehydratase from Chlorobaculum parvum (strain DSM 263 / NCIMB 8327) (Chlorobium vibrioforme subsp. thiosulfatophilum).